A 257-amino-acid polypeptide reads, in one-letter code: Large ribosomal subunit protein uL2 (257 aa).

Residues 207–230 (VEHPFGGGNHQHIGKPSTIRRDAP) form a disordered region.

Belongs to the universal ribosomal protein uL2 family. As to quaternary structure, component of the large ribosomal subunit.

It localises to the cytoplasm. Functionally, component of the large ribosomal subunit. The ribosome is a large ribonucleoprotein complex responsible for the synthesis of proteins in the cell. The protein is Large ribosomal subunit protein uL2 (rpl8) of Danio rerio (Zebrafish).